Here is a 576-residue protein sequence, read N- to C-terminus: Protein O-linked-mannose beta-1,4-N-acetylglucosaminyltransferase 2 (576 aa).

The Cytoplasmic segment spans residues 1–4; sequence MNIS. Residues 5–25 form a helical; Signal-anchor for type II membrane protein membrane-spanning segment; that stretch reads AVFNALLVSIMAAVLWKHVKL. The Lumenal portion of the chain corresponds to 26-576; it reads LEQFYVIEEE…PFAEVLVCNT (551 aa). N-linked (GlcNAc...) asparagine glycosylation is found at N98, N275, N335, N451, N539, and N561. The Fibronectin type-III domain occupies 482-576; it reads RESKCQASAQ…PFAEVLVCNT (95 aa).

The protein belongs to the glycosyltransferase 61 family.

The protein localises to the endoplasmic reticulum membrane. It catalyses the reaction 3-O-(alpha-D-mannosyl)-L-threonyl-[protein] + UDP-N-acetyl-alpha-D-glucosamine = 3-O-(N-acetyl-beta-D-glucosaminyl-(1-&gt;4)-alpha-D-mannosyl)-L-threonyl-[protein] + UDP + H(+). It functions in the pathway protein modification; protein glycosylation. Its function is as follows. O-linked mannose beta-1,4-N-acetylglucosaminyltransferase that transfers UDP-N-acetyl-D-glucosamine to the 4-position of the mannose to generate N-acetyl-D-glucosamine-beta-1,4-O-D-mannosylprotein. Involved in the biosynthesis of the phosphorylated O-mannosyl trisaccharide (N-acetylgalactosamine-beta-3-N-acetylglucosamine-beta-4-(phosphate-6-)mannose), a carbohydrate structure present in alpha-dystroglycan (DAG1), which is required for binding laminin G-like domain-containing extracellular proteins with high affinity. The polypeptide is Protein O-linked-mannose beta-1,4-N-acetylglucosaminyltransferase 2 (pomgnt2) (Xenopus tropicalis (Western clawed frog)).